A 227-amino-acid chain; its full sequence is PKHD-type hydroxylase BURPS668_A1690 (227 aa).

One can recognise a Fe2OG dioxygenase domain in the interval 78–178; the sequence is KVFPPLFNRY…RVASFFWIQS (101 aa). Residues His-96, Asp-98, and His-159 each coordinate Fe cation. Arg-169 serves as a coordination point for 2-oxoglutarate.

Requires Fe(2+) as cofactor. L-ascorbate is required as a cofactor.

The protein is PKHD-type hydroxylase BURPS668_A1690 of Burkholderia pseudomallei (strain 668).